We begin with the raw amino-acid sequence, 331 residues long: Betaine-homocysteine S-methyltransferase (331 aa).

The region spanning 3–324 is the Hcy-binding domain; sequence VNQKWNWDTK…TDVLAIRKYV (322 aa). Residues C243, C309, and C310 each coordinate Zn(2+).

Belongs to the Betaine-homocysteine S-methyltransferase, BHMT family. Zn(2+) is required as a cofactor.

The catalysed reaction is L-homocysteine + glycine betaine = N,N-dimethylglycine + L-methionine. It participates in amino-acid biosynthesis; L-methionine biosynthesis via de novo pathway. Its function is as follows. Involved in the regulation of homocysteine metabolism. Converts betaine and homocysteine to dimethylglycine and methionine, respectively. The chain is Betaine-homocysteine S-methyltransferase from Drosophila melanogaster (Fruit fly).